Consider the following 158-residue polypeptide: Transcription elongation factor GreA (158 aa).

The stretch at 10–75 forms a coiled coil; the sequence is TKEGKEKLEQ…QMLENMIRNA (66 aa).

Belongs to the GreA/GreB family.

Functionally, necessary for efficient RNA polymerase transcription elongation past template-encoded arresting sites. The arresting sites in DNA have the property of trapping a certain fraction of elongating RNA polymerases that pass through, resulting in locked ternary complexes. Cleavage of the nascent transcript by cleavage factors such as GreA or GreB allows the resumption of elongation from the new 3'terminus. GreA releases sequences of 2 to 3 nucleotides. The chain is Transcription elongation factor GreA from Geobacillus kaustophilus (strain HTA426).